The following is a 198-amino-acid chain: Segregation and condensation protein B (198 aa).

It belongs to the ScpB family. In terms of assembly, homodimer. Homodimerization may be required to stabilize the binding of ScpA to the Smc head domains. Component of a cohesin-like complex composed of ScpA, ScpB and the Smc homodimer, in which ScpA and ScpB bind to the head domain of Smc. The presence of the three proteins is required for the association of the complex with DNA.

The protein localises to the cytoplasm. Its function is as follows. Participates in chromosomal partition during cell division. May act via the formation of a condensin-like complex containing Smc and ScpA that pull DNA away from mid-cell into both cell halves. The sequence is that of Segregation and condensation protein B from Streptococcus mutans serotype c (strain ATCC 700610 / UA159).